The following is a 326-amino-acid chain: tRNA uridine(34) hydroxylase (326 aa).

A Rhodanese domain is found at 123 to 217; that stretch reads SDPEVLLIDT…YLEEVKPEES (95 aa). Residue Cys177 is the Cysteine persulfide intermediate of the active site. The interval 293 to 326 is disordered; it reads KSRGESHIGSDVKQVIEARRQDKVERKQRQHQEG.

It belongs to the TrhO family.

It carries out the reaction uridine(34) in tRNA + AH2 + O2 = 5-hydroxyuridine(34) in tRNA + A + H2O. Its function is as follows. Catalyzes oxygen-dependent 5-hydroxyuridine (ho5U) modification at position 34 in tRNAs. The chain is tRNA uridine(34) hydroxylase from Shewanella loihica (strain ATCC BAA-1088 / PV-4).